The sequence spans 145 residues: Ribonuclease P protein component (145 aa).

The disordered stretch occupies residues 119–145; it reads PLPAAPGTMPPARTVRPSSPSPTEPEL.

The protein belongs to the RnpA family. As to quaternary structure, consists of a catalytic RNA component (M1 or rnpB) and a protein subunit.

The catalysed reaction is Endonucleolytic cleavage of RNA, removing 5'-extranucleotides from tRNA precursor.. In terms of biological role, RNaseP catalyzes the removal of the 5'-leader sequence from pre-tRNA to produce the mature 5'-terminus. It can also cleave other RNA substrates such as 4.5S RNA. The protein component plays an auxiliary but essential role in vivo by binding to the 5'-leader sequence and broadening the substrate specificity of the ribozyme. This is Ribonuclease P protein component from Xanthomonas euvesicatoria pv. vesicatoria (strain 85-10) (Xanthomonas campestris pv. vesicatoria).